Here is a 160-residue protein sequence, read N- to C-terminus: Major pollen allergen Bet v 1-G (160 aa).

Positions 55, 82, 84, and 101 each coordinate brassinolide.

Belongs to the BetVI family.

The protein resides in the cytoplasm. Its function is as follows. May be a general steroid carrier protein. The chain is Major pollen allergen Bet v 1-G (BETV1G) from Betula pendula (European white birch).